The chain runs to 184 residues: Endothelial cell-specific molecule 1 (184 aa).

Positions Met1–Ala19 are cleaved as a signal peptide. An IGFBP N-terminal domain is found at Tyr24–Cys102. Intrachain disulfides connect Cys28-Cys51, Cys32-Cys53, Cys37-Cys54, Cys43-Cys57, Cys65-Cys83, and Cys77-Cys99. O-linked (Xyl...) (chondroitin sulfate) serine glycosylation occurs at Ser156.

In terms of assembly, monomer. In terms of processing, may contain intrachain disulfide bonds. O-glycosylated; contains chondroitin sulfate and dermatan sulfate. In terms of tissue distribution, expressed in lung, on the vascular capillary network within alveolar walls, and also at lower level in kidney.

The protein resides in the secreted. In terms of biological role, involved in angiogenesis; promotes angiogenic sprouting. May have potent implications in lung endothelial cell-leukocyte interactions. The protein is Endothelial cell-specific molecule 1 (ESM1) of Homo sapiens (Human).